A 64-amino-acid polypeptide reads, in one-letter code: UPF0370 protein YE1145 (64 aa).

Residues 3–23 (WLADYWWVVLIILVGMILNGI) form a helical membrane-spanning segment. Positions 36–64 (SNKPEIPPHRDNNAQWDDDDDWPDKDKKK) are disordered.

The protein belongs to the UPF0370 family.

The protein localises to the cell membrane. In Yersinia enterocolitica serotype O:8 / biotype 1B (strain NCTC 13174 / 8081), this protein is UPF0370 protein YE1145.